A 230-amino-acid chain; its full sequence is Nicotinamide riboside kinase (230 aa).

Residue 12–20 participates in ATP binding; sequence GASCSGKST. Mg(2+)-binding residues include Ser19 and Asp38. The active-site Proton acceptor is Asp38. Residues 38–41 and 56–57 each bind substrate; these read DDFY and WD. Arg153 serves as a coordination point for ATP. Substrate-binding positions include Arg154 and 159 to 160; that span reads GY. Residues 157–159 and 203–205 contribute to the ATP site; these read RTG and RIQ.

It belongs to the uridine kinase family. NRK subfamily.

It catalyses the reaction beta-nicotinamide D-riboside + ATP = beta-nicotinamide D-ribonucleotide + ADP + H(+). The catalysed reaction is beta-D-ribosylnicotinate + ATP = nicotinate beta-D-ribonucleotide + ADP + H(+). The protein operates within cofactor biosynthesis; NAD(+) biosynthesis. Its function is as follows. Catalyzes the phosphorylation of nicotinamide riboside (NR) and nicotinic acid riboside (NaR) to form nicotinamide mononucleotide (NMN) and nicotinic acid mononucleotide (NaMN). This Schizosaccharomyces pombe (strain 972 / ATCC 24843) (Fission yeast) protein is Nicotinamide riboside kinase (nrk1).